Reading from the N-terminus, the 140-residue chain is Sec-independent protein translocase protein TatB (140 aa).

A helical transmembrane segment spans residues Leu-2–Gly-22. The disordered stretch occupies residues Val-90–Thr-140. Pro residues predominate over residues Val-100–Ala-119.

It belongs to the TatB family. In terms of assembly, the Tat system comprises two distinct complexes: a TatABC complex, containing multiple copies of TatA, TatB and TatC subunits, and a separate TatA complex, containing only TatA subunits. Substrates initially bind to the TatABC complex, which probably triggers association of the separate TatA complex to form the active translocon.

The protein localises to the cell inner membrane. In terms of biological role, part of the twin-arginine translocation (Tat) system that transports large folded proteins containing a characteristic twin-arginine motif in their signal peptide across membranes. Together with TatC, TatB is part of a receptor directly interacting with Tat signal peptides. TatB may form an oligomeric binding site that transiently accommodates folded Tat precursor proteins before their translocation. This chain is Sec-independent protein translocase protein TatB, found in Hyphomonas neptunium (strain ATCC 15444).